Consider the following 511-residue polypeptide: uncharacterized protein (511 aa).

This is an uncharacterized protein from Acanthamoeba polyphaga (Amoeba).